The following is a 211-amino-acid chain: MTSQRTRERLIQRLYDEGLSNPQVLEVIRRTPRHLFVDEALAHRAYEDTALPIGHNQTISQPYMVARMSELLLAAGPLDKVLEIGTGSGYQTAVLSQLVERVFSVERIKVLQDRAKERLQELNLRNVVFRWGDGWEGWPALAPYNGIIVTAVATDIPQALLDQLAPGGRLVIPVGAGEVQQLMLIIREEQGFARHVLGAVRFVPLLNGPLA.

Ser60 is a catalytic residue.

The protein belongs to the methyltransferase superfamily. L-isoaspartyl/D-aspartyl protein methyltransferase family.

It is found in the cytoplasm. It carries out the reaction [protein]-L-isoaspartate + S-adenosyl-L-methionine = [protein]-L-isoaspartate alpha-methyl ester + S-adenosyl-L-homocysteine. Catalyzes the methyl esterification of L-isoaspartyl residues in peptides and proteins that result from spontaneous decomposition of normal L-aspartyl and L-asparaginyl residues. It plays a role in the repair and/or degradation of damaged proteins. This is Protein-L-isoaspartate O-methyltransferase from Pseudomonas fluorescens (strain ATCC BAA-477 / NRRL B-23932 / Pf-5).